The sequence spans 147 residues: Large ribosomal subunit protein uL11 (147 aa).

This sequence belongs to the universal ribosomal protein uL11 family. As to quaternary structure, part of the ribosomal stalk of the 50S ribosomal subunit. Interacts with L10 and the large rRNA to form the base of the stalk. L10 forms an elongated spine to which L12 dimers bind in a sequential fashion forming a multimeric L10(L12)X complex. In terms of processing, one or more lysine residues are methylated.

Its function is as follows. Forms part of the ribosomal stalk which helps the ribosome interact with GTP-bound translation factors. The chain is Large ribosomal subunit protein uL11 from Bacteroides thetaiotaomicron (strain ATCC 29148 / DSM 2079 / JCM 5827 / CCUG 10774 / NCTC 10582 / VPI-5482 / E50).